The chain runs to 335 residues: Phosphate acyltransferase (335 aa).

Belongs to the PlsX family. Homodimer. Probably interacts with PlsY.

It is found in the cytoplasm. It catalyses the reaction a fatty acyl-[ACP] + phosphate = an acyl phosphate + holo-[ACP]. Its pathway is lipid metabolism; phospholipid metabolism. Its function is as follows. Catalyzes the reversible formation of acyl-phosphate (acyl-PO(4)) from acyl-[acyl-carrier-protein] (acyl-ACP). This enzyme utilizes acyl-ACP as fatty acyl donor, but not acyl-CoA. The protein is Phosphate acyltransferase of Heliobacterium modesticaldum (strain ATCC 51547 / Ice1).